The following is a 188-amino-acid chain: Small ribosomal subunit protein uS12m (188 aa).

Residues Met-1–Gly-63 constitute a mitochondrion transit peptide.

It belongs to the universal ribosomal protein uS12 family.

The protein localises to the mitochondrion. In terms of biological role, protein S12 is involved in the translation initiation step. This is Small ribosomal subunit protein uS12m (RPS12) from Oenothera elata subsp. hookeri (Hooker's evening primrose).